A 752-amino-acid polypeptide reads, in one-letter code: DNA topoisomerase 4 subunit A (752 aa).

One can recognise a Topo IIA-type catalytic domain in the interval 31-494; that stretch reads LPFIGDGLKP…EAKAMSEHDM (464 aa). Catalysis depends on Y120, which acts as the O-(5'-phospho-DNA)-tyrosine intermediate. Residues 472 to 492 are disordered; that stretch reads YGDDRRSPLREREEAKAMSEH. The span at 473 to 492 shows a compositional bias: basic and acidic residues; it reads GDDRRSPLREREEAKAMSEH.

This sequence belongs to the type II topoisomerase GyrA/ParC subunit family. ParC type 1 subfamily. As to quaternary structure, heterotetramer composed of ParC and ParE.

The protein resides in the cell membrane. It carries out the reaction ATP-dependent breakage, passage and rejoining of double-stranded DNA.. Functionally, topoisomerase IV is essential for chromosome segregation. It relaxes supercoiled DNA. Performs the decatenation events required during the replication of a circular DNA molecule. This is DNA topoisomerase 4 subunit A from Salmonella typhimurium (strain LT2 / SGSC1412 / ATCC 700720).